The following is a 138-amino-acid chain: Iron sulfur cluster assembly protein 1 (138 aa).

This sequence belongs to the NifU family. As to quaternary structure, component of the core Fe-S cluster (ISC) assembly machinery. It depends on [2Fe-2S] cluster as a cofactor.

The protein localises to the cytoplasm. Its pathway is cofactor biosynthesis; iron-sulfur cluster biosynthesis. Scaffold protein for the de novo synthesis of iron-sulfur (Fe-S) clusters within mitosomes, which is required for maturation of both [2Fe-2S] and [4Fe-4S] proteins. First, a [2Fe-2S] cluster is transiently assembled on the scaffold protein ISU1. In a second step, the cluster is released from ISU1, transferred to a glutaredoxin, followed by the formation of [2Fe-2S] proteins, the synthesis of [4Fe-4S] clusters and their target-specific insertion into the recipient apoproteins. Cluster assembly on ISU1 depends on the function of the cysteine desulfurase complex NFS1-ISD11, which serves as the sulfur donor for cluster synthesis, the iron-binding protein frataxin as the putative iron donor, and the electron transfer chain comprised of ferredoxin reductase and ferredoxin, which receive their electrons from NADH. The protein is Iron sulfur cluster assembly protein 1 (ISU1) of Trachipleistophora hominis (Microsporidian parasite).